We begin with the raw amino-acid sequence, 695 residues long: Highly divergent homeobox (695 aa).

2 DNA-binding regions (homeobox) span residues 3–63 and 440–503; these read LRSV…SSKS and ALQD…RLMG. Positions 56-81 are disordered; sequence RRKMSSKSALESGGAPPGTAHTAPSV. A disordered region spans residues 653 to 695; sequence QQALLSDLPPELEEMDFNHTSPEPDDTSFSLSSLSEKNASDSL. Polar residues predominate over residues 679 to 695; it reads TSFSLSSLSEKNASDSL.

It localises to the nucleus. This chain is Highly divergent homeobox (HDX), found in Gallus gallus (Chicken).